Reading from the N-terminus, the 122-residue chain is Crustacean hyperglycemic hormones 5 (122 aa).

Positions 1 to 26 (MSLGLIASRLVAVALVVVVACSTTWA) are cleaved as a signal peptide. 3 disulfides stabilise this stretch: C55–C91, C71–C87, and C74–C100. V120 is subject to Valine amide.

This sequence belongs to the arthropod CHH/MIH/GIH/VIH hormone family.

It localises to the secreted. In terms of biological role, hormone found in the sinus gland of isopods and decapods which controls the blood sugar level. Has a secretagogue action over the amylase released from the midgut gland. May act as a stress hormone and may be involved in the control of molting and reproduction. The protein is Crustacean hyperglycemic hormones 5 (CHH5) of Penaeus monodon (Giant tiger prawn).